The primary structure comprises 291 residues: Deaminated glutathione amidase (291 aa).

The CN hydrolase domain maps to 13–268 (KRIGLGQITS…NDIAFVDIDL (256 aa)). Glutamate 52 functions as the Proton acceptor in the catalytic mechanism. The active-site Proton donor is the lysine 130. Catalysis depends on cysteine 172, which acts as the Nucleophile.

Belongs to the carbon-nitrogen hydrolase superfamily. NIT1/NIT2 family.

The enzyme catalyses N-(4-oxoglutaryl)-L-cysteinylglycine + H2O = L-cysteinylglycine + 2-oxoglutarate. Its function is as follows. Catalyzes the hydrolysis of the amide bond in N-(4-oxoglutarate)-L-cysteinylglycine (deaminated glutathione), a metabolite repair reaction to dispose of the harmful deaminated glutathione. This Dictyostelium discoideum (Social amoeba) protein is Deaminated glutathione amidase (nit1-1).